The chain runs to 143 residues: Ninjurin-2 (143 aa).

Over 1-61 (MESDRETIHL…KSVLQQGPFA (61 aa)) the chain is Extracellular. The segment at 26-38 (NFYATKKSVAESM) is helix alpha1. Residues 39 to 58 (LDVALFMSNAMRLKSVLQQG) are helix alpha2. The chain crosses the membrane as a helical span at residues 62 to 93 (EYYTTLVTLIIVSLLLQVVISLLLVFIAILNL). At 94–97 (NEVE) the chain is on the cytoplasmic side. The helical transmembrane segment at 98–127 (NQRHLNKLNNAATILVFITVVINIFITAFG) threads the bilayer. Lysine 104 is a cholesterol binding site. Residues 128–143 (AHHAASMAARTSSNPI) are Extracellular-facing.

It belongs to the ninjurin family. Homooligomer; in response to stimuli, homooligomerizes into filaments. In contrast to NINJ1, the filament is curved toward the intracellular space, preventing its circularization on a relatively flat membrane to mediate plasma membrane rupture: curvature is caused by cholesterol-binding at the cytoplasmic leaflet.

The protein resides in the cell membrane. Its function is as follows. Its role in unclear. In contrast to NINJ1 paralog, does not mediate plasma membrane rupture (cytolysis) downstream of necroptotic and pyroptotic programmed cell death. While it is able to oligomerize and form filaments, filaments are curved toward the intracellular space, preventing circularization to mediate plasma membrane rupture. May act as a homophilic transmembrane adhesion molecule involved in nerve regeneration. Promotes axonal growth. In Mus musculus (Mouse), this protein is Ninjurin-2 (Ninj2).